The primary structure comprises 138 residues: ATP synthase subunit g, mitochondrial (138 aa).

Belongs to the ATPase g subunit family. F-type ATP synthases have 2 components, the catalytic core F(1) and the membrane-embedded component F(0), linked together by a central stalk and a peripheral stalk. The central stalk, also called rotor shaft, is often seen as part of F(1). The peripheral stalk is seen as part of F(0). F(0) contains the membrane channel next to the rotor. F-type ATP synthases form dimers but each monomer functions independently in ATP generation. The dimer consists of 17 different polypeptides: ATP1 (subunit alpha, 3 molecules per monomer, part of F(1)), ATP2 (subunit beta, 3 copies per monomer, part of F(1)), ATP3 (subunit gamma, part of the central stalk), ATP4 (subunit b, part of the peripheral stalk), ATP5/OSCP (subunit 5/OSCP, part of the peripheral stalk), ATP6 (subunit a, part of the peripheral stalk), ATP7 (subunit d, part of the peripheral stalk), ATP8 (subunit 8, part of the peripheral stalk), OLI1 (subunit c, part of the rotor, 10 molecules per monomer), ATP14 (subunit h, part of the peripheral stalk), ATP15 (subunit epsilon, part of the central stalk), ATP16 (subunit delta, part of the central stalk), ATP17 (subunit f, part of the peripheral stalk), ATP18 (subunit i/j, part of the peripheral stalk), ATP19 (subunit k, dimer-specific, at interface between monomers), ATP20 (subunit g, at interface between monomers), TIM11 (subunit e, at interface between monomers).

It localises to the mitochondrion inner membrane. In terms of biological role, mitochondrial membrane ATP synthase (F(1)F(0) ATP synthase or Complex V) produces ATP from ADP in the presence of a proton gradient across the membrane which is generated by electron transport complexes of the respiratory chain. F-type ATP synthases consist of two structural domains, F(1) - containing the extramembraneous catalytic core, and F(0) - containing the membrane proton channel, linked together by a central stalk and a peripheral stalk. During catalysis, ATP synthesis in the catalytic domain of F(1) is coupled via a rotary mechanism of the central stalk subunits to proton translocation. Part of the complex F(0) domain. Minor subunit located with subunit a/ATP6 in the membrane. Together with subunit e/TIM11, probably contributes to membrane curvature at the site of the ATP synthase dimer, ultimately contributing to formation of cristae. The polypeptide is ATP synthase subunit g, mitochondrial (Yarrowia lipolytica (strain CLIB 122 / E 150) (Yeast)).